The sequence spans 464 residues: GTPase Der (464 aa).

2 consecutive EngA-type G domains span residues 3–166 (ALVA…PVLE) and 177–350 (LQFA…QSAN). GTP is bound by residues 9–16 (GRPNVGKS), 56–60 (DTGGV), 118–121 (NKAE), 183–190 (GRPNVGKS), 230–234 (DTAGI), and 295–298 (NKWD). The region spanning 351–435 (SHLPTGELNR…PIALEFRTVK (85 aa)) is the KH-like domain.

This sequence belongs to the TRAFAC class TrmE-Era-EngA-EngB-Septin-like GTPase superfamily. EngA (Der) GTPase family. As to quaternary structure, associates with the 50S ribosomal subunit.

Its function is as follows. GTPase that plays an essential role in the late steps of ribosome biogenesis. This Nitrosococcus oceani (strain ATCC 19707 / BCRC 17464 / JCM 30415 / NCIMB 11848 / C-107) protein is GTPase Der.